The chain runs to 491 residues: Glutamyl-tRNA(Gln) amidotransferase subunit A (491 aa).

Catalysis depends on charge relay system residues K78 and S158. S182 serves as the catalytic Acyl-ester intermediate.

Belongs to the amidase family. GatA subfamily. In terms of assembly, heterotrimer of A, B and C subunits.

It catalyses the reaction L-glutamyl-tRNA(Gln) + L-glutamine + ATP + H2O = L-glutaminyl-tRNA(Gln) + L-glutamate + ADP + phosphate + H(+). Allows the formation of correctly charged Gln-tRNA(Gln) through the transamidation of misacylated Glu-tRNA(Gln) in organisms which lack glutaminyl-tRNA synthetase. The reaction takes place in the presence of glutamine and ATP through an activated gamma-phospho-Glu-tRNA(Gln). The chain is Glutamyl-tRNA(Gln) amidotransferase subunit A from Bradyrhizobium sp. (strain BTAi1 / ATCC BAA-1182).